Here is a 285-residue protein sequence, read N- to C-terminus: Small ribosomal subunit protein uS2 (285 aa).

The segment at 229-285 (RHNGKSNAAEEPMAEWERELLEQHEEQKSQDAAPAEQSAPAAEAPAETEQKDAPAAE) is disordered. Residues 243 to 257 (EWERELLEQHEEQKS) are compositionally biased toward basic and acidic residues. The span at 260 to 275 (AAPAEQSAPAAEAPAE) shows a compositional bias: low complexity. Over residues 276–285 (TEQKDAPAAE) the composition is skewed to basic and acidic residues.

Belongs to the universal ribosomal protein uS2 family.

In Kocuria rhizophila (strain ATCC 9341 / DSM 348 / NBRC 103217 / DC2201), this protein is Small ribosomal subunit protein uS2.